Here is a 1014-residue protein sequence, read N- to C-terminus: MATEGTTGSGSRVVAGMVCSLWLLVLGSSVLALEEVLLDTTGETSEIGWLTYPPGGWDEVSVLDDQRRLTRTFEACHVAGLPPGSGQDNWLQTHFVERRGAQRAHIRLHFSVRACSSLGVSGGTCRETFTLYYRQADEPDGPDSIAAWHLKRWTKVDTIAADESFPASSSSSSWAVGPHRTGQRVGLQLNVKERSFGPLTQRGFYVAFQDTGACLALVAVKLFSYTCPSVLRAFASFPETQASGAGGASLVAAVGTCVAHAEPEEDGVGGQAGGSPPRLHCNGEGRWMVAVGGCRCQPGHQPARGDKLCQACPEGSYKALAGNVPCSPCPARSHSPDPAAPVCPCLQGFYRASSDPPEAPCTGPPSAPRELWFEVQGSALMLHWRLPQELGGRGDLLFNVVCKECGGHGEPSSGGMCRRCRDEVHFDPRQRGLTESRVLVGGLRAHVPYILEVQAVNGVSELSPDPPQAAAINVSTSHEVPSAVPVMHQVSRAANSITVSWPQPEQTNGNILDYQLRYYDQAEDESHSFTMTSETNTATVTRLSPGHIYGFQVRARTAAGHGPYGGKVYFQTLPQGELSSQLPEKLSLVIGSILGALAFLLLAAITVLAVIFQRKRRGTGYTEQLQQYSSPGLGVKYYIDPSTYDDPCQAIRELAREVDPTYIKIEEVIGAGSFGEVRRGRLQPRGRREQAVAIQALWAGGAESLKMTFLGRAALLGQFQHPNILRLEGVVTKSRPVMVLTELMELGPLDSFLRQREGQFSSLQLVAMQRGVAAAMQYLSSFAFVHRALSARSVLVNSHLVCKVARLGHSPQGSSSLLRWAAPEVITHGKYTTSSDVWSFGILMWEVMSYGERPYWDMNEQEVLNAIEQEFRLPPPPGCPPGLHLLMLDTWQKDRARRPHFDQLVAAFDKMIRKPDTLQAEGGSGDRPSQALLNPVALDFPCLDSPQAWLSAIGLECYQDNFSKFGLSTFSDVAQLSLEDLPGLGITLAGHQKKLLHNIQLLQQHLRQPGSVEV.

Residues 1 to 32 (MATEGTTGSGSRVVAGMVCSLWLLVLGSSVLA) form the signal peptide. Over 33 to 591 (LEEVLLDTTG…LPEKLSLVIG (559 aa)) the chain is Extracellular. The 199-residue stretch at 34–232 (EEVLLDTTGE…FSYTCPSVLR (199 aa)) folds into the Eph LBD domain. Fibronectin type-III domains lie at 364–479 (PPSA…TSHE) and 480–575 (VPSA…TLPQ). N-linked (GlcNAc...) asparagine glycosylation occurs at asparagine 473. Residues 592-612 (SILGALAFLLLAAITVLAVIF) traverse the membrane as a helical segment. The Cytoplasmic segment spans residues 613–1014 (QRKRRGTGYT…HLRQPGSVEV (402 aa)). The Protein kinase domain maps to 663–912 (IKIEEVIGAG…QLVAAFDKMI (250 aa)). 669–677 (IGAGSFGEV) is a binding site for ATP. In terms of domain architecture, SAM spans 941–1005 (PCLDSPQAWL…LHNIQLLQQH (65 aa)). Positions 1012–1014 (VEV) match the PDZ-binding motif.

The protein belongs to the protein kinase superfamily. Tyr protein kinase family. Ephrin receptor subfamily. Interacts with CBL and EPHB1. Interacts with FYN; this interaction takes place in a ligand-independent manner. Post-translationally, ligand-binding increases phosphorylation on tyrosine residues. Phosphorylation on tyrosine residues is mediated by transphosphorylation by the catalytically active EPHB1 in a ligand-independent manner. Tyrosine phosphorylation of the receptor may act as a switch on the functional transition from cell adhesion/attraction to de-adhesion/repulsion. As to expression, high level in thymus, and brain. Very low levels of expression in kidney, lung, liver, bone marrow, skeletal muscle, spleen from 2 week old and adult mice, heart, testes and embryonic stem cells.

Its subcellular location is the cell membrane. It is found in the secreted. In terms of biological role, kinase-defective receptor for members of the ephrin-B family. Binds to ephrin-B1 and ephrin-B2. Modulates cell adhesion and migration by exerting both positive and negative effects upon stimulation with ephrin-B2. Inhibits JNK activation, T-cell receptor-induced IL-2 secretion and CD25 expression upon stimulation with ephrin-B2. The protein is Ephrin type-B receptor 6 (Ephb6) of Mus musculus (Mouse).